The following is a 169-amino-acid chain: uncharacterized protein (169 aa).

A compositionally biased stretch (low complexity) spans 144 to 157; the sequence is AEAHSASPASSDSS. Residues 144-169 form a disordered region; sequence AEAHSASPASSDSSPLTNNIRPISIM. A compositionally biased stretch (polar residues) spans 158-169; it reads PLTNNIRPISIM.

This is an uncharacterized protein from Saccharomyces cerevisiae (strain ATCC 204508 / S288c) (Baker's yeast).